Consider the following 340-residue polypeptide: Glycerol-3-phosphate dehydrogenase [NAD(P)+] (340 aa).

NADPH is bound by residues S12, W13, and K110. K110, G141, and S143 together coordinate sn-glycerol 3-phosphate. A145 contributes to the NADPH binding site. The sn-glycerol 3-phosphate site is built by K196, D249, S259, R260, and N261. K196 functions as the Proton acceptor in the catalytic mechanism. An NADPH-binding site is contributed by R260. Residues V284 and E286 each coordinate NADPH.

This sequence belongs to the NAD-dependent glycerol-3-phosphate dehydrogenase family.

It is found in the cytoplasm. It carries out the reaction sn-glycerol 3-phosphate + NAD(+) = dihydroxyacetone phosphate + NADH + H(+). The catalysed reaction is sn-glycerol 3-phosphate + NADP(+) = dihydroxyacetone phosphate + NADPH + H(+). The protein operates within membrane lipid metabolism; glycerophospholipid metabolism. Its function is as follows. Catalyzes the reduction of the glycolytic intermediate dihydroxyacetone phosphate (DHAP) to sn-glycerol 3-phosphate (G3P), the key precursor for phospholipid synthesis. The protein is Glycerol-3-phosphate dehydrogenase [NAD(P)+] of Latilactobacillus sakei subsp. sakei (strain 23K) (Lactobacillus sakei subsp. sakei).